The primary structure comprises 506 residues: Glutamate--tRNA ligase (506 aa).

The short motif at 14–24 (PSPTGYLHIGG) is the 'HIGH' region element. Positions 261-265 (KLSKR) match the 'KMSKS' region motif. Position 264 (K264) interacts with ATP.

The protein belongs to the class-I aminoacyl-tRNA synthetase family. Glutamate--tRNA ligase type 1 subfamily. Monomer.

The protein resides in the cytoplasm. It carries out the reaction tRNA(Glu) + L-glutamate + ATP = L-glutamyl-tRNA(Glu) + AMP + diphosphate. Catalyzes the attachment of glutamate to tRNA(Glu) in a two-step reaction: glutamate is first activated by ATP to form Glu-AMP and then transferred to the acceptor end of tRNA(Glu). The sequence is that of Glutamate--tRNA ligase from Roseiflexus sp. (strain RS-1).